The chain runs to 471 residues: Ribulose bisphosphate carboxylase large chain (471 aa).

An N6,N6,N6-trimethyllysine modification is found at Lys5. Substrate is bound by residues Asn114 and Thr164. The active-site Proton acceptor is the Lys166. Residue Lys168 participates in substrate binding. The Mg(2+) site is built by Lys192, Asp194, and Glu195. Residue Lys192 is modified to N6-carboxylysine. The active-site Proton acceptor is the His285. 3 residues coordinate substrate: Arg286, His318, and Ser370.

The protein belongs to the RuBisCO large chain family. Type I subfamily. As to quaternary structure, heterohexadecamer of 8 large chains and 8 small chains; disulfide-linked. The disulfide link is formed within the large subunit homodimers. Mg(2+) serves as cofactor. In terms of processing, the disulfide bond which can form in the large chain dimeric partners within the hexadecamer appears to be associated with oxidative stress and protein turnover.

The protein localises to the plastid. The protein resides in the chloroplast. It carries out the reaction 2 (2R)-3-phosphoglycerate + 2 H(+) = D-ribulose 1,5-bisphosphate + CO2 + H2O. The enzyme catalyses D-ribulose 1,5-bisphosphate + O2 = 2-phosphoglycolate + (2R)-3-phosphoglycerate + 2 H(+). Its function is as follows. RuBisCO catalyzes two reactions: the carboxylation of D-ribulose 1,5-bisphosphate, the primary event in carbon dioxide fixation, as well as the oxidative fragmentation of the pentose substrate in the photorespiration process. Both reactions occur simultaneously and in competition at the same active site. The polypeptide is Ribulose bisphosphate carboxylase large chain (Schlumbergera truncata (Thanksgiving cactus)).